We begin with the raw amino-acid sequence, 331 residues long: Cytosolic Fe-S cluster assembly factor CFD1 (331 aa).

An ATP-binding site is contributed by 25–32 (GKGGVGKS). Residues Cys-211 and Cys-214 each coordinate [4Fe-4S] cluster.

The protein belongs to the Mrp/NBP35 ATP-binding proteins family. NUBP2/CFD1 subfamily. In terms of assembly, heterotetramer of 2 NBP35 and 2 CFD1 chains. [4Fe-4S] cluster serves as cofactor.

The protein localises to the cytoplasm. Its function is as follows. Component of the cytosolic iron-sulfur (Fe/S) protein assembly (CIA) machinery. Required for maturation of extramitochondrial Fe-S proteins. The NBP35-CFD1 heterotetramer forms a Fe-S scaffold complex, mediating the de novo assembly of an Fe-S cluster and its transfer to target apoproteins. This is Cytosolic Fe-S cluster assembly factor CFD1 from Cryptococcus neoformans var. neoformans serotype D (strain B-3501A) (Filobasidiella neoformans).